Reading from the N-terminus, the 155-residue chain is SsrA-binding protein (155 aa).

The protein belongs to the SmpB family.

Its subcellular location is the cytoplasm. Its function is as follows. Required for rescue of stalled ribosomes mediated by trans-translation. Binds to transfer-messenger RNA (tmRNA), required for stable association of tmRNA with ribosomes. tmRNA and SmpB together mimic tRNA shape, replacing the anticodon stem-loop with SmpB. tmRNA is encoded by the ssrA gene; the 2 termini fold to resemble tRNA(Ala) and it encodes a 'tag peptide', a short internal open reading frame. During trans-translation Ala-aminoacylated tmRNA acts like a tRNA, entering the A-site of stalled ribosomes, displacing the stalled mRNA. The ribosome then switches to translate the ORF on the tmRNA; the nascent peptide is terminated with the 'tag peptide' encoded by the tmRNA and targeted for degradation. The ribosome is freed to recommence translation, which seems to be the essential function of trans-translation. This is SsrA-binding protein from Ligilactobacillus salivarius (strain UCC118) (Lactobacillus salivarius).